The chain runs to 330 residues: 4-hydroxythreonine-4-phosphate dehydrogenase (330 aa).

Positions 136 and 137 each coordinate substrate. H166, H211, and H266 together coordinate a divalent metal cation. Substrate is bound by residues K274, N283, and R292.

It belongs to the PdxA family. As to quaternary structure, homodimer. Requires Zn(2+) as cofactor. Mg(2+) is required as a cofactor. Co(2+) serves as cofactor.

Its subcellular location is the cytoplasm. It catalyses the reaction 4-(phosphooxy)-L-threonine + NAD(+) = 3-amino-2-oxopropyl phosphate + CO2 + NADH. It functions in the pathway cofactor biosynthesis; pyridoxine 5'-phosphate biosynthesis; pyridoxine 5'-phosphate from D-erythrose 4-phosphate: step 4/5. In terms of biological role, catalyzes the NAD(P)-dependent oxidation of 4-(phosphooxy)-L-threonine (HTP) into 2-amino-3-oxo-4-(phosphooxy)butyric acid which spontaneously decarboxylates to form 3-amino-2-oxopropyl phosphate (AHAP). The chain is 4-hydroxythreonine-4-phosphate dehydrogenase from Serratia proteamaculans (strain 568).